Reading from the N-terminus, the 491-residue chain is Cysteine--tRNA ligase (491 aa).

C31 lines the Zn(2+) pocket. Residues 33–43 carry the 'HIGH' region motif; sequence PTVYGDAHLGH. The Zn(2+) site is built by C226, H251, and E255. The 'KMSKS' region signature appears at 283 to 287; sequence KMGKS. ATP is bound at residue K286.

It belongs to the class-I aminoacyl-tRNA synthetase family. In terms of assembly, monomer. It depends on Zn(2+) as a cofactor.

Its subcellular location is the cytoplasm. It carries out the reaction tRNA(Cys) + L-cysteine + ATP = L-cysteinyl-tRNA(Cys) + AMP + diphosphate. This chain is Cysteine--tRNA ligase, found in Bacteroides fragilis (strain ATCC 25285 / DSM 2151 / CCUG 4856 / JCM 11019 / LMG 10263 / NCTC 9343 / Onslow / VPI 2553 / EN-2).